A 187-amino-acid polypeptide reads, in one-letter code: Ras-like protein rasD (187 aa).

Residue 10–17 participates in GTP binding; it reads GGGGVGKS. The Effector region signature appears at 32-40; it reads YDPTIEDSY. Residues 57–61 and 116–119 each bind GTP; these read DTAGQ and NKAD. A Cysteine methyl ester modification is found at Cys-184. A lipid anchor (S-geranylgeranyl cysteine) is attached at Cys-184. Positions 185–187 are cleaved as a propeptide — removed in mature form; sequence LIL.

This sequence belongs to the small GTPase superfamily. Ras family.

It localises to the cell membrane. The enzyme catalyses GTP + H2O = GDP + phosphate + H(+). Alternates between an inactive form bound to GDP and an active form bound to GTP. Activated by a guanine nucleotide-exchange factor (GEF) and inactivated by a GTPase-activating protein (GAP). Functionally, ras proteins bind GDP/GTP and possess intrinsic GTPase activity. The polypeptide is Ras-like protein rasD (rasD) (Dictyostelium discoideum (Social amoeba)).